Consider the following 475-residue polypeptide: Probable L-cysteine desulfhydrase, chloroplastic (475 aa).

A chloroplast-targeting transit peptide spans 1–24; sequence MASSLSPPEEASYHHRHTKRYTSS. The tract at residues 1 to 40 is disordered; sequence MASSLSPPEEASYHHRHTKRYTSSASSASSTTNGTVESSV. The segment covering 22 to 32 has biased composition (low complexity); the sequence is TSSASSASSTT. Lys-284 is subject to N6-(pyridoxal phosphate)lysine.

Belongs to the class-V pyridoxal-phosphate-dependent aminotransferase family. In terms of assembly, interacts in vitro with QS.

Its subcellular location is the plastid. It is found in the chloroplast. In terms of biological role, may catalyze the production of hydrogen sulfide (H2S) from cysteine. The chain is Probable L-cysteine desulfhydrase, chloroplastic from Arabidopsis thaliana (Mouse-ear cress).